The sequence spans 470 residues: UDP-N-acetylmuramate--L-alanine ligase (470 aa).

ATP is bound at residue 114 to 120; it reads GTHGKTT.

It belongs to the MurCDEF family.

It is found in the cytoplasm. The enzyme catalyses UDP-N-acetyl-alpha-D-muramate + L-alanine + ATP = UDP-N-acetyl-alpha-D-muramoyl-L-alanine + ADP + phosphate + H(+). Its pathway is cell wall biogenesis; peptidoglycan biosynthesis. Cell wall formation. The chain is UDP-N-acetylmuramate--L-alanine ligase from Xanthobacter autotrophicus (strain ATCC BAA-1158 / Py2).